The sequence spans 432 residues: Adenosine 3'-phospho 5'-phosphosulfate transporter 1 (432 aa).

The next 9 helical transmembrane spans lie at 5–25 (WWAVVVLAAFPSLGAGGETPE), 40–60 (VVNAAGYASFMVPGYLLVQYF), 109–129 (ALKLLFCATGLQVSYLTWGVL), 154–174 (FLVLMNRVLALIVAGLSCVLC), 238–258 (WEYLTATLISIGVSMFLLSSG), 265–285 (PATTLSGLILLAGYIAFDSFT), 299–319 (SVQMMFGVNFFSCLFTVGSLL), 353–373 (LFIFYTIGQFGAAVFTIIMTL), and 387–407 (GHTVTVVGGLGVAVVFAALLL). Ser427 bears the Phosphoserine mark.

Belongs to the nucleotide-sugar transporter family. SLC35B subfamily.

It is found in the golgi apparatus membrane. It carries out the reaction 3'-phosphoadenylyl sulfate(in) + adenosine 3',5'-bisphosphate(out) = 3'-phosphoadenylyl sulfate(out) + adenosine 3',5'-bisphosphate(in). Functionally, probably functions as a 3'-phosphoadenylyl sulfate:adenosine 3',5'-bisphosphate antiporter at the Golgi membranes. Mediates the transport from the cytosol into the lumen of the Golgi of 3'-phosphoadenylyl sulfate/adenosine 3'-phospho 5'-phosphosulfate (PAPS), a universal sulfuryl donor for sulfation events that take place in that compartment. This Pongo abelii (Sumatran orangutan) protein is Adenosine 3'-phospho 5'-phosphosulfate transporter 1.